Consider the following 120-residue polypeptide: Large ribosomal subunit protein uL18 (120 aa).

Belongs to the universal ribosomal protein uL18 family. As to quaternary structure, part of the 50S ribosomal subunit; part of the 5S rRNA/L5/L18/L25 subcomplex. Contacts the 5S and 23S rRNAs.

This is one of the proteins that bind and probably mediate the attachment of the 5S RNA into the large ribosomal subunit, where it forms part of the central protuberance. The protein is Large ribosomal subunit protein uL18 of Treponema pallidum (strain Nichols).